The following is a 903-amino-acid chain: Protein translocase subunit SecA (903 aa).

Residues Q87, 105–109 (GEGKT), and D512 contribute to the ATP site. Residues C887, C889, C898, and H899 each coordinate Zn(2+).

The protein belongs to the SecA family. As to quaternary structure, monomer and homodimer. Part of the essential Sec protein translocation apparatus which comprises SecA, SecYEG and auxiliary proteins SecDF-YajC and YidC. Zn(2+) is required as a cofactor.

The protein resides in the cell inner membrane. The protein localises to the cytoplasm. The enzyme catalyses ATP + H2O + cellular proteinSide 1 = ADP + phosphate + cellular proteinSide 2.. In terms of biological role, part of the Sec protein translocase complex. Interacts with the SecYEG preprotein conducting channel. Has a central role in coupling the hydrolysis of ATP to the transfer of proteins into and across the cell membrane, serving both as a receptor for the preprotein-SecB complex and as an ATP-driven molecular motor driving the stepwise translocation of polypeptide chains across the membrane. The protein is Protein translocase subunit SecA of Photorhabdus laumondii subsp. laumondii (strain DSM 15139 / CIP 105565 / TT01) (Photorhabdus luminescens subsp. laumondii).